Reading from the N-terminus, the 199-residue chain is MTKVLGITGGIATGKSTVVALFKKAGYPIVDGDIIAREIVAKGQPALAAIVETFGPEIVLTTGELDRKKLGQLIFASPQKRELLNETLKPFLRKEILRQIEEAKKKAALVIVDIPLLYEAHYEAIMDQVAVVYVPEKIQKERLMARNQLTEEEAQQRIASQWPIEMKKERADIVFDNQGTREETEQQVKKWLEEQIGKK.

One can recognise a DPCK domain in the interval 4-199 (VLGITGGIAT…KWLEEQIGKK (196 aa)). 12 to 17 (ATGKST) contributes to the ATP binding site.

The protein belongs to the CoaE family.

Its subcellular location is the cytoplasm. It catalyses the reaction 3'-dephospho-CoA + ATP = ADP + CoA + H(+). It participates in cofactor biosynthesis; coenzyme A biosynthesis; CoA from (R)-pantothenate: step 5/5. Functionally, catalyzes the phosphorylation of the 3'-hydroxyl group of dephosphocoenzyme A to form coenzyme A. The sequence is that of Dephospho-CoA kinase from Enterococcus faecalis (strain ATCC 700802 / V583).